The sequence spans 111 residues: PCNA-associated factor (111 aa).

Residue Ser-8 is modified to Phosphoserine. Lys-15 participates in a covalent cross-link: Glycyl lysine isopeptide (Lys-Gly) (interchain with G-Cter in ubiquitin). The D-box motif lies at 23–34; it reads RKVLGSSTSATN. The segment at 23 to 111 is disordered; the sequence is RKVLGSSTSA…QPDHTNDEKE (89 aa). Residue Lys-24 is modified to N6-acetyllysine; alternate. Lys-24 participates in a covalent cross-link: Glycyl lysine isopeptide (Lys-Gly) (interchain with G-Cter in ubiquitin); alternate. Residues Ser-28, Ser-31, and Ser-72 each carry the phosphoserine modification. Positions 28–40 are enriched in low complexity; it reads SSTSATNSTSVSS. A PIP-box motif is present at residues 62–72; sequence QKGIGEFFRLS. The span at 72-81 shows a compositional bias: basic and acidic residues; the sequence is SPKDSEKENQ. The short motif at 78-80 is the KEN box element; the sequence is KEN. Residues 85–97 carry the Initiation motif motif; it reads EAGSSGLGKAKRK.

As to quaternary structure, interacts (when monoubiquitinated at Lys-15 and Lys-24) with PCNA. Interacts with isoform 2/p33ING1b of ING1. Interacts with BRCA1. Monoubiquitinated at Lys-15 and Lys-24 during normal S phase, promoting its association with PCNA. Also diubiquitinated at these 2 sites. Following DNA damage, monoubiquitin chains at Lys-15 and Lys-24 are probably extended, leading to disrupt the interaction with PCNA. Polyubiquitinated by the APC/C complex at the mitotic exit, leading to its degradation by the proteasome. Expressed predominantly in liver, pancreas and placenta. Not detected in heart or brain. Highly expressed in a number of tumors, especially esophageal tumors, in anaplastic thyroid carcinomas, adrenocortical carcinomas, and in non-small-cell lung cancer lines.

Its subcellular location is the nucleus. It localises to the cytoplasm. It is found in the perinuclear region. In terms of biological role, PCNA-binding protein that acts as a regulator of DNA repair during DNA replication. Following DNA damage, the interaction with PCNA is disrupted, facilitating the interaction between monoubiquitinated PCNA and the translesion DNA synthesis DNA polymerase eta (POLH) at stalled replisomes, facilitating the bypass of replication-fork-blocking lesions. Also acts as a regulator of centrosome number. The protein is PCNA-associated factor of Homo sapiens (Human).